Here is a 1507-residue protein sequence, read N- to C-terminus: Chromatin-remodeling ATPase INO80 (1507 aa).

Disordered stretches follow at residues Pro30 to Asp82 and Arg428 to Gln452. A compositionally biased stretch (polar residues) spans Gly38 to Ser67. The DBINO domain occupies Ala350–Ser475. Over residues Arg428–Arg450 the composition is skewed to basic and acidic residues. The 172-residue stretch at Val598 to Met769 folds into the Helicase ATP-binding domain. Asp611–Thr618 contacts ATP. Residues Thr1210–Gln1360 form the Helicase C-terminal domain. Residues Leu1415 to Asn1507 form a disordered region. The segment covering Ala1491–Asn1507 has biased composition (polar residues).

It belongs to the SNF2/RAD54 helicase family. Component of the INO80 chromatin-remodeling complex. Associates with REF6/EIN6.

It localises to the nucleus. It carries out the reaction ATP + H2O = ADP + phosphate + H(+). Functionally, ATPase component of the chromatin remodeling INO80 complex which is involved in transcriptional regulation, DNA replication and DNA repair. Binds DNA. As part of the INO80 complex, remodels chromatin by shifting nucleosomes. The INO80 complex controls ethylene-induced H2A.Z eviction dynamics. Positive regulator of homologous recombination, but not an essential component of homologous recombination. Not involved in the illegitimate repair pathway. The sequence is that of Chromatin-remodeling ATPase INO80 from Arabidopsis thaliana (Mouse-ear cress).